The chain runs to 170 residues: Sec-independent protein translocase protein TatB (170 aa).

The chain crosses the membrane as a helical span at residues 1–21 (MIDLGISKLALIGAVALIVIG).

Belongs to the TatB family. As to quaternary structure, the Tat system comprises two distinct complexes: a TatABC complex, containing multiple copies of TatA, TatB and TatC subunits, and a separate TatA complex, containing only TatA subunits. Substrates initially bind to the TatABC complex, which probably triggers association of the separate TatA complex to form the active translocon.

The protein localises to the cell inner membrane. Its function is as follows. Part of the twin-arginine translocation (Tat) system that transports large folded proteins containing a characteristic twin-arginine motif in their signal peptide across membranes. Together with TatC, TatB is part of a receptor directly interacting with Tat signal peptides. TatB may form an oligomeric binding site that transiently accommodates folded Tat precursor proteins before their translocation. The sequence is that of Sec-independent protein translocase protein TatB from Cupriavidus necator (strain ATCC 17699 / DSM 428 / KCTC 22496 / NCIMB 10442 / H16 / Stanier 337) (Ralstonia eutropha).